The chain runs to 174 residues: MATGPRYKVPFRRRREGRTNYHLRLKLLISKQDRVVVRKSARNVQIQLIAPTPEGDITYSSAVSSELAKYGYTGVTGNTTAAYLTGLLFGLKSLKKGYEGGILDIGLQASSAGSRVYAALKGIVDSGFEVPCSPEVFPSDERIRGEHIAEYREESSDLPEQFEATKEKIFAEFS.

The protein belongs to the universal ribosomal protein uL18 family. In terms of assembly, part of the 50S ribosomal subunit. Contacts the 5S and 23S rRNAs.

Functionally, this is one of the proteins that bind and probably mediate the attachment of the 5S RNA into the large ribosomal subunit, where it forms part of the central protuberance. This Methanosarcina barkeri (strain Fusaro / DSM 804) protein is Large ribosomal subunit protein uL18.